The following is a 77-amino-acid chain: Cysteine-rich protein 1 (77 aa).

An LIM zinc-binding domain is found at 2 to 63 (PKCPKCNKEV…HPCYAAMFGP (62 aa)). N6-acetyllysine is present on residues K9 and K22. An Omega-N-methylarginine modification is found at R68.

Functionally, seems to have a role in zinc absorption and may function as an intracellular zinc transport protein. The sequence is that of Cysteine-rich protein 1 (CRIP1) from Homo sapiens (Human).